Here is a 70-residue protein sequence, read N- to C-terminus: Large ribosomal subunit protein eL38 (70 aa).

The protein belongs to the eukaryotic ribosomal protein eL38 family.

This is Large ribosomal subunit protein eL38 (RpL38) from Timarcha balearica.